Reading from the N-terminus, the 207-residue chain is Uracil phosphoribosyltransferase (207 aa).

Residues Arg-77, Arg-102, and 129–137 (DPMLATGGS) each bind 5-phospho-alpha-D-ribose 1-diphosphate. Residues Ile-192 and 197–199 (GDA) each bind uracil. Asp-198 provides a ligand contact to 5-phospho-alpha-D-ribose 1-diphosphate.

This sequence belongs to the UPRTase family. It depends on Mg(2+) as a cofactor.

It carries out the reaction UMP + diphosphate = 5-phospho-alpha-D-ribose 1-diphosphate + uracil. The protein operates within pyrimidine metabolism; UMP biosynthesis via salvage pathway; UMP from uracil: step 1/1. With respect to regulation, allosterically activated by GTP. Catalyzes the conversion of uracil and 5-phospho-alpha-D-ribose 1-diphosphate (PRPP) to UMP and diphosphate. This Mycoplasma mycoides subsp. mycoides SC (strain CCUG 32753 / NCTC 10114 / PG1) protein is Uracil phosphoribosyltransferase.